The chain runs to 393 residues: Thermostable carboxypeptidase 1 (393 aa).

His104, Asp109, and His245 together coordinate Zn(2+). The active-site Proton donor is the Tyr302. Residue Glu373 is the Nucleophile of the active site.

The protein belongs to the peptidase M20 family. Homotetramer. The cofactor is Zn(2+).

Functionally, can release basic, acidic, aromatic, and, to a lesser extent, aliphatic amino acids. The chain is Thermostable carboxypeptidase 1 (cpsA1) from Saccharolobus solfataricus (strain ATCC 35092 / DSM 1617 / JCM 11322 / P2) (Sulfolobus solfataricus).